A 148-amino-acid polypeptide reads, in one-letter code: SsrA-binding protein (148 aa).

The protein belongs to the SmpB family.

The protein localises to the cytoplasm. Required for rescue of stalled ribosomes mediated by trans-translation. Binds to transfer-messenger RNA (tmRNA), required for stable association of tmRNA with ribosomes. tmRNA and SmpB together mimic tRNA shape, replacing the anticodon stem-loop with SmpB. tmRNA is encoded by the ssrA gene; the 2 termini fold to resemble tRNA(Ala) and it encodes a 'tag peptide', a short internal open reading frame. During trans-translation Ala-aminoacylated tmRNA acts like a tRNA, entering the A-site of stalled ribosomes, displacing the stalled mRNA. The ribosome then switches to translate the ORF on the tmRNA; the nascent peptide is terminated with the 'tag peptide' encoded by the tmRNA and targeted for degradation. The ribosome is freed to recommence translation, which seems to be the essential function of trans-translation. The polypeptide is SsrA-binding protein (Burkholderia ambifaria (strain ATCC BAA-244 / DSM 16087 / CCUG 44356 / LMG 19182 / AMMD) (Burkholderia cepacia (strain AMMD))).